We begin with the raw amino-acid sequence, 101 residues long: NAD(P)H-quinone oxidoreductase subunit 4L, chloroplastic (101 aa).

3 helical membrane-spanning segments follow: residues 2-22 (ILEH…YGLI), 32-52 (MCLE…SDFF), and 61-81 (IFSI…PAIL).

The protein belongs to the complex I subunit 4L family. NDH is composed of at least 16 different subunits, 5 of which are encoded in the nucleus.

It is found in the plastid. The protein resides in the chloroplast thylakoid membrane. It carries out the reaction a plastoquinone + NADH + (n+1) H(+)(in) = a plastoquinol + NAD(+) + n H(+)(out). It catalyses the reaction a plastoquinone + NADPH + (n+1) H(+)(in) = a plastoquinol + NADP(+) + n H(+)(out). Functionally, NDH shuttles electrons from NAD(P)H:plastoquinone, via FMN and iron-sulfur (Fe-S) centers, to quinones in the photosynthetic chain and possibly in a chloroplast respiratory chain. The immediate electron acceptor for the enzyme in this species is believed to be plastoquinone. Couples the redox reaction to proton translocation, and thus conserves the redox energy in a proton gradient. The sequence is that of NAD(P)H-quinone oxidoreductase subunit 4L, chloroplastic from Platanus occidentalis (Sycamore).